Consider the following 567-residue polypeptide: TGF-beta receptor type-2 (567 aa).

Residues 1–22 form the signal peptide; sequence MGRGLLRGLWPLHIVLWTRIAS. Residues 23-166 lie on the Extracellular side of the membrane; the sequence is TIPPHVQKSV…NPDLLLVIFQ (144 aa). Disulfide bonds link cysteine 51-cysteine 84, cysteine 54-cysteine 71, cysteine 61-cysteine 67, cysteine 77-cysteine 101, cysteine 121-cysteine 136, and cysteine 138-cysteine 143. Asparagine 70 and asparagine 94 each carry an N-linked (GlcNAc...) asparagine glycan. A glycan (N-linked (GlcNAc...) asparagine) is linked at asparagine 154. A helical membrane pass occupies residues 167-187; sequence VTGISLLPPLGVAISVIIIFY. Topologically, residues 188-567 are cytoplasmic; sequence CYRVNRQQKL…PEDGSLNTTK (380 aa). The Protein kinase domain occupies 244–544; the sequence is IELDTLVGKG…AERFSELEHL (301 aa). ATP contacts are provided by residues 250–258 and lysine 277; that span reads VGKGRFAEV. Aspartate 379 functions as the Proton acceptor in the catalytic mechanism. 3 positions are modified to phosphoserine: serine 409, serine 548, and serine 553. Residues 439 to 567 are sufficient for interaction with CLU; sequence VESFKQTDVY…PEDGSLNTTK (129 aa).

The protein belongs to the protein kinase superfamily. TKL Ser/Thr protein kinase family. TGFB receptor subfamily. As to quaternary structure, homodimer. Heterohexamer; TGFB1, TGFB2 and TGFB3 homodimeric ligands assemble a functional receptor composed of two TGFBR1 and TGFBR2 heterodimers to form a ligand-receptor heterohexamer. The respective affinity of TGFRB1 and TGFRB2 for the ligands may modulate the kinetics of assembly of the receptor and may explain the different biological activities of TGFB1, TGFB2 and TGFB3. Component of a complex composed of TSC22D1 (via N-terminus), TGFBR1 and TGFBR2; the interaction between TSC22D1 and TGFBR1 is inhibited by SMAD7 and promoted by TGFB1. Interacts with DAXX. Interacts with DYNLT4. Interacts with ZFYVE9; ZFYVE9 recruits SMAD2 and SMAD3 to the TGF-beta receptor. Interacts with and is activated by SCUBE3; this interaction does not affect TGFB1-binding to TGFBR2. Interacts with VPS39; this interaction is independent of the receptor kinase activity and of the presence of TGF-beta. Interacts with CLU. In terms of assembly, homodimer; disulfide-linked. Mg(2+) serves as cofactor. The cofactor is Mn(2+). Post-translationally, phosphorylated on a Ser/Thr residue in the cytoplasmic domain.

Its subcellular location is the cell membrane. The protein localises to the membrane raft. It is found in the secreted. The catalysed reaction is L-threonyl-[receptor-protein] + ATP = O-phospho-L-threonyl-[receptor-protein] + ADP + H(+). It catalyses the reaction L-seryl-[receptor-protein] + ATP = O-phospho-L-seryl-[receptor-protein] + ADP + H(+). Its function is as follows. Transmembrane serine/threonine kinase forming with the TGF-beta type I serine/threonine kinase receptor, TGFBR1, the non-promiscuous receptor for the TGF-beta cytokines TGFB1, TGFB2 and TGFB3. Transduces the TGFB1, TGFB2 and TGFB3 signal from the cell surface to the cytoplasm and thus regulates a plethora of physiological and pathological processes including cell cycle arrest in epithelial and hematopoietic cells, control of mesenchymal cell proliferation and differentiation, wound healing, extracellular matrix production, immunosuppression and carcinogenesis. The formation of the receptor complex composed of 2 TGFBR1 and 2 TGFBR2 molecules symmetrically bound to the cytokine dimer results in the phosphorylation and activation of TGFBR1 by the constitutively active TGFBR2. Activated TGFBR1 phosphorylates SMAD2 which dissociates from the receptor and interacts with SMAD4. The SMAD2-SMAD4 complex is subsequently translocated to the nucleus where it modulates the transcription of the TGF-beta-regulated genes. This constitutes the canonical SMAD-dependent TGF-beta signaling cascade. Also involved in non-canonical, SMAD-independent TGF-beta signaling pathways. Has transforming growth factor beta-activated receptor activity. Functionally, binds TGFB1, TGFB2 and TGFB3 in the picomolar affinity range without the participation of additional receptors. Blocks activation of SMAD2 and SMAD3 by TGFB1. This chain is TGF-beta receptor type-2 (TGFBR2), found in Homo sapiens (Human).